The chain runs to 316 residues: Beta-galactosidase small subunit (316 aa).

The protein belongs to the bacterial beta-galactosidase small subunit family. As to quaternary structure, heterodimer of a large (LacL) and a small subunit (LacM).

It carries out the reaction Hydrolysis of terminal non-reducing beta-D-galactose residues in beta-D-galactosides.. In terms of biological role, component of a beta-galactosidase. This chain is Beta-galactosidase small subunit (lacM), found in Lactobacillus acidophilus (strain ATCC 700396 / NCK56 / N2 / NCFM).